The primary structure comprises 178 residues: Translation initiation factor IF-3 (178 aa).

The disordered stretch occupies residues 1-20 (MRRPFKAAAPTKDGPRSNRD).

The protein belongs to the IF-3 family. As to quaternary structure, monomer.

It is found in the cytoplasm. IF-3 binds to the 30S ribosomal subunit and shifts the equilibrium between 70S ribosomes and their 50S and 30S subunits in favor of the free subunits, thus enhancing the availability of 30S subunits on which protein synthesis initiation begins. This Mesorhizobium japonicum (strain LMG 29417 / CECT 9101 / MAFF 303099) (Mesorhizobium loti (strain MAFF 303099)) protein is Translation initiation factor IF-3.